Here is a 364-residue protein sequence, read N- to C-terminus: Alanine racemase (364 aa).

Catalysis depends on Lys35, which acts as the Proton acceptor; specific for D-alanine. The residue at position 35 (Lys35) is an N6-(pyridoxal phosphate)lysine. Arg136 contacts substrate. The Proton acceptor; specific for L-alanine role is filled by Tyr261. Met309 contacts substrate.

The protein belongs to the alanine racemase family. Requires pyridoxal 5'-phosphate as cofactor.

It catalyses the reaction L-alanine = D-alanine. The protein operates within amino-acid biosynthesis; D-alanine biosynthesis; D-alanine from L-alanine: step 1/1. Functionally, catalyzes the interconversion of L-alanine and D-alanine. May also act on other amino acids. The sequence is that of Alanine racemase (alr) from Shewanella amazonensis (strain ATCC BAA-1098 / SB2B).